An 840-amino-acid polypeptide reads, in one-letter code: E3 ubiquitin-protein ligase SH3RF1 (840 aa).

The segment at 12–53 (CPVCLERLDASAKVLPCQHTFCKRCLLGIVGSRNELRCPECR) adopts an RING-type zinc-finger fold. A disordered region spans residues 105-129 (VTCSPKDGPSSQGGPQPRAQAWSPP). 2 consecutive SH3 domains span residues 134–193 (PQLP…IIKP) and 196–259 (QPPP…FNSA). 6 disordered regions span residues 267–324 (DQPP…RHSM), 394–442 (TLNP…PRPS), 516–545 (GPASRGGVLANPPSTGGPAQKPPGNGVAGG), 578–633 (QARS…AASG), 652–723 (AASL…LGAE), and 744–773 (MAPGPQRRASSLDSAPVAPPPRQPCSSLGP). The span at 273–282 (GVAAGEGALA) shows a compositional bias: low complexity. Residues 283-292 (TTPSSTTTKQ) show a composition bias toward polar residues. An interaction with RAC1 region spans residues 292-362 (QPDGKKNTKK…APSQVHISTT (71 aa)). Position 304 is a phosphoserine (serine 304). Low complexity-rich tracts occupy residues 307–320 (SLSMASKASQAAQQ) and 405–424 (QAATPTGTAVAAAAGMGPRP). Positions 434–537 (HPRPQPRPSV…PSTGGPAQKP (104 aa)) are interaction with AKT2. Residues 439–500 (PRPSVYVAIY…PGNYVAPVTR (62 aa)) form the SH3 3 domain. A compositionally biased stretch (pro residues) spans 616-625 (SPQPPAPLGP). The span at 681-692 (RPDKDGKKEKKG) shows a compositional bias: basic and acidic residues. Serine 709 carries the phosphoserine modification. Residues 781–840 (AVCERHRVVVSYPPQSEAELELKEGDIVFVHKKREDGWFKGTLQRNGKTGLFPGSFVENI) enclose the SH3 4 domain.

This sequence belongs to the SH3RF family. As to quaternary structure, interacts with RAC1; in a GTP-dependent manner. Interacts with MAP3K10/MLK2 and MAP3K11/MLK3. Interacts with MAPK8IP; this interaction leads to the PJAC complex (POSH-JIP or SH3RF1/MAPK8IP apoptotic complex) with a 1:1 ratio. Interacts with SIAH1. Interacts with HERP1. Probably part of a signaling complex that may contain SH3RF1, MAPK8IP, DLK1, MAP2K4/MKK4, MAP2K7/MKK7, MAPK8/JNK1, MAPK9/JNK2, AKT1 and AKT2. Found in a complex with RAC2, MAP3K7/TAK1, MAP2K7/MKK7, MAPK8IP1/JIP1, MAPK8/JNK1 and MAPK9/JNK2. Found in a complex with RAC1, MAP3K11/MLK3, MAP2K7/MKK7, MAPK8IP1/JIP1 and MAPK8/JNK1. Interacts with SH3RF2. Phosphorylated at Ser-304 by AKT1 and AKT2. When phosphorylated, it has reduced ability to bind Rac. In terms of processing, autoubiquitinated. Ubiquitinated by SH3RF2, leading to proteasome-mediated degradation.

The protein resides in the cytoplasm. It localises to the perinuclear region. Its subcellular location is the cell projection. The protein localises to the lamellipodium. It is found in the golgi apparatus. The protein resides in the trans-Golgi network. It catalyses the reaction S-ubiquitinyl-[E2 ubiquitin-conjugating enzyme]-L-cysteine + [acceptor protein]-L-lysine = [E2 ubiquitin-conjugating enzyme]-L-cysteine + N(6)-ubiquitinyl-[acceptor protein]-L-lysine.. It functions in the pathway protein modification; protein ubiquitination. Has E3 ubiquitin-protein ligase activity. In the absence of an external substrate, it can catalyze self-ubiquitination. Stimulates ubiquitination of potassium channel KCNJ1, enhancing it's dynamin-dependent and clathrin-independent endocytosis. Acts as a scaffold protein that coordinates with MAPK8IP1/JIP1 in organizing different components of the JNK pathway, including RAC1 or RAC2, MAP3K11/MLK3 or MAP3K7/TAK1, MAP2K7/MKK7, MAPK8/JNK1 and/or MAPK9/JNK2 into a functional multiprotein complex to ensure the effective activation of the JNK signaling pathway. Regulates the differentiation of CD4(+) and CD8(+) T-cells and promotes T-helper 1 (Th1) cell differentiation. Regulates the activation of MAPK8/JNK1 and MAPK9/JNK2 in CD4(+) T-cells and the activation of MAPK8/JNK1 in CD8(+) T-cells. Plays a crucial role in the migration of neocortical neurons in the developing brain. Controls proper cortical neuronal migration and the formation of proximal cytoplasmic dilation in the leading process (PCDLP) in migratory neocortical neurons by regulating the proper localization of activated RAC1 and F-actin assembly. The chain is E3 ubiquitin-protein ligase SH3RF1 (SH3RF1) from Bos taurus (Bovine).